Reading from the N-terminus, the 274-residue chain is Non-heme haloperoxidase (274 aa).

The region spanning 22–254 is the AB hydrolase-1 domain; it reads PIMFHHGWPL…RLKVYPGLSH (233 aa). Residues serine 95, aspartate 225, and histidine 254 contribute to the active site.

Belongs to the AB hydrolase superfamily. Bacterial non-heme haloperoxidase / perhydrolase family.

The sequence is that of Non-heme haloperoxidase (thcF) from Rhodococcus erythropolis (Arthrobacter picolinophilus).